A 363-amino-acid chain; its full sequence is S-adenosylmethionine:tRNA ribosyltransferase-isomerase (363 aa).

Belongs to the QueA family. Monomer.

Its subcellular location is the cytoplasm. It catalyses the reaction 7-aminomethyl-7-carbaguanosine(34) in tRNA + S-adenosyl-L-methionine = epoxyqueuosine(34) in tRNA + adenine + L-methionine + 2 H(+). Its pathway is tRNA modification; tRNA-queuosine biosynthesis. Functionally, transfers and isomerizes the ribose moiety from AdoMet to the 7-aminomethyl group of 7-deazaguanine (preQ1-tRNA) to give epoxyqueuosine (oQ-tRNA). In Synechococcus sp. (strain RCC307), this protein is S-adenosylmethionine:tRNA ribosyltransferase-isomerase.